The following is a 45-amino-acid chain: Thymosin beta-15A homolog (45 aa).

Positions 19 to 45 (KKTNTEEKNTLPSKETIEQEKECVKSS) are disordered. Basic and acidic residues predominate over residues 21–45 (TNTEEKNTLPSKETIEQEKECVKSS).

This sequence belongs to the thymosin beta family.

Its subcellular location is the cytoplasm. It localises to the cytoskeleton. In terms of biological role, plays an important role in the organization of the cytoskeleton. Binds to and sequesters actin monomers (G actin) and therefore inhibits actin polymerization. This chain is Thymosin beta-15A homolog, found in Coturnix japonica (Japanese quail).